A 62-amino-acid chain; its full sequence is Ferredoxin-3 (62 aa).

4Fe-4S ferredoxin-type domains are found at residues 2 to 28 (SLKITEECTFCAACEPECPVNAISAGS) and 29 to 62 (DIYVIDESACTECEGYADSPACVAVCPAECIVKA). Residues cysteine 9, cysteine 12, cysteine 15, cysteine 19, cysteine 38, cysteine 41, cysteine 50, and cysteine 54 each coordinate [4Fe-4S] cluster.

[4Fe-4S] cluster is required as a cofactor.

Its function is as follows. Ferredoxins are iron-sulfur proteins that transfer electrons in a wide variety of metabolic reactions. This is Ferredoxin-3 from Chlorobaculum tepidum (strain ATCC 49652 / DSM 12025 / NBRC 103806 / TLS) (Chlorobium tepidum).